A 280-amino-acid chain; its full sequence is Protein IMPACT homolog (280 aa).

In terms of domain architecture, RWD spans 9–109; that stretch reads DELLALESIY…QAAAERESKL (101 aa).

The protein belongs to the IMPACT family. In terms of assembly, interacts (via N-terminus) with gcn1 (via C-terminus); this interaction reduces the gcn1-gcn20 complex formation and prevents the interaction of gcn1 with gcn2 protein kinase and gcn2 activation in amino acid-starved cells. Interacts (via C-terminus) with act1; this interaction occurs in a gcn1-independent manner. Interacts with rpl39; this interaction occurs in a gcn1-independent manner. Associates (via middle region) with ribosomes; this association occurs in a gcn1-independent manner and persists under amino acid starvation conditions.

The protein localises to the cytoplasm. It is found in the nucleus. Functionally, translational regulator that ensures constant high levels of translation under amino acid starvation. Plays a role as a negative regulator of the gcn2 kinase activity; impairs gcn1-mediated gcn2 activation, and hence gcn2-mediated eIF-2-alpha phosphorylation in amino acid-starved cells and subsequent down-regulation of protein synthesis. In normal conditions, it resides in a actin complex and has no activity. The sequence is that of Protein IMPACT homolog (yih1) from Schizosaccharomyces pombe (strain 972 / ATCC 24843) (Fission yeast).